Here is a 377-residue protein sequence, read N- to C-terminus: MTPHEIDIALGMEKYYYEDWNELDGTIERPNGFKVIEEIDFKPAQDWKGETKGKYAVFLLTKWGIDHFSAISEVQKVLHSKVNYIGIKDANAITSQLVYIPLNEKQELIEKYQSRSFILKFLGFSSKKLNHTGNIFEISLSISDFDIVIERIEQIKKNPYLPAFIGYQRFGTRRPITHLIGKYLLRRDWEKAFYLILTYPFLSESKETIDIRKLIMEGDFKEAVRSIPSKFKQEKLLLKNYMRFNSYYLALKSSFIPISLYLDAYQSYLFNLYLSRKLDEYKNLNDKVNLLIRIPIYFNNCDDVCKEIYLDEGIERNFFKLQEFKISLRDLVRKAFMNIRDLKVNEETKTISFVLERGMYATILLREILRGDPRKFT.

Residue Asp89 is the Nucleophile of the active site. A TRUD domain is found at 160–377; it reads YLPAFIGYQR…ILRGDPRKFT (218 aa).

Belongs to the pseudouridine synthase TruD family.

It catalyses the reaction uridine(13) in tRNA = pseudouridine(13) in tRNA. Its function is as follows. Could be responsible for synthesis of pseudouridine from uracil-13 in transfer RNAs. The polypeptide is Probable tRNA pseudouridine synthase D (Saccharolobus solfataricus (strain ATCC 35092 / DSM 1617 / JCM 11322 / P2) (Sulfolobus solfataricus)).